A 277-amino-acid polypeptide reads, in one-letter code: NADPH-dependent 7-cyano-7-deazaguanine reductase (277 aa).

Substrate is bound at residue 83–85 (VES). 85–86 (SK) contributes to the NADPH binding site. C184 acts as the Thioimide intermediate in catalysis. D191 serves as the catalytic Proton donor. Substrate is bound at residue 223 to 224 (HE). 252–253 (RG) serves as a coordination point for NADPH.

The protein belongs to the GTP cyclohydrolase I family. QueF type 2 subfamily. In terms of assembly, homodimer.

It localises to the cytoplasm. It carries out the reaction 7-aminomethyl-7-carbaguanine + 2 NADP(+) = 7-cyano-7-deazaguanine + 2 NADPH + 3 H(+). Its pathway is tRNA modification; tRNA-queuosine biosynthesis. In terms of biological role, catalyzes the NADPH-dependent reduction of 7-cyano-7-deazaguanine (preQ0) to 7-aminomethyl-7-deazaguanine (preQ1). This Cupriavidus metallidurans (strain ATCC 43123 / DSM 2839 / NBRC 102507 / CH34) (Ralstonia metallidurans) protein is NADPH-dependent 7-cyano-7-deazaguanine reductase.